Reading from the N-terminus, the 1043-residue chain is Peroxisomal ATPase PEX1 (1043 aa).

The segment at 453-626 is AAA-cassette D1; sequence ATPAIILDGK…SKNQIMKLNR (174 aa). Residues 461–468 and 738–745 contribute to the ATP site; these read GKQGIGKT and GYPGCGKT. The AAA-cassette D2 stretch occupies residues 733-926; the sequence is GILLYGYPGC…CYNAYLKSVH (194 aa).

This sequence belongs to the AAA ATPase family. As to quaternary structure, interacts with PEX6; forming the PEX1-PEX6 AAA ATPase complex, which is composed of a heterohexamer formed by a trimer of PEX1-PEX6 dimers. The PEX1-PEX6 heterooligomers associate with the peroxisomal importomer via interaction of PEX6 with the peroxisomal membrane anchor PEX15.

It is found in the cytoplasm. Its subcellular location is the cytosol. The protein resides in the peroxisome membrane. It carries out the reaction ATP + H2O = ADP + phosphate + H(+). In terms of biological role, component of the PEX1-PEX6 AAA ATPase complex, a protein dislocase complex that mediates the ATP-dependent extraction of the PEX5 receptor from peroxisomal membranes, an essential step for PEX5 recycling. Specifically recognizes PEX5 monoubiquitinated at 'Cys-6', and pulls it out of the peroxisome lumen through the PEX2-PEX10-PEX12 retrotranslocation channel. Extraction by the PEX1-PEX6 AAA ATPase complex is accompanied by unfolding of the TPR repeats and release of bound cargo from PEX5. In Saccharomyces cerevisiae (strain ATCC 204508 / S288c) (Baker's yeast), this protein is Peroxisomal ATPase PEX1.